The following is a 225-amino-acid chain: Small ribosomal subunit protein mS26 (225 aa).

This sequence belongs to the mitochondrion-specific ribosomal protein mS26 family. In terms of assembly, component of the mitochondrial ribosome small subunit (28S) which comprises a 12S rRNA and about 30 distinct proteins.

Its subcellular location is the mitochondrion. The polypeptide is Small ribosomal subunit protein mS26 (mRpS26) (Drosophila melanogaster (Fruit fly)).